The following is a 269-amino-acid chain: tRNA pseudouridine synthase A (269 aa).

The Nucleophile role is filled by D55. Y111 is a binding site for substrate.

The protein belongs to the tRNA pseudouridine synthase TruA family.

It carries out the reaction uridine(38/39/40) in tRNA = pseudouridine(38/39/40) in tRNA. Its function is as follows. Formation of pseudouridine at positions 38, 39 and 40 in the anticodon stem and loop of transfer RNAs. This is tRNA pseudouridine synthase A from Methanosarcina barkeri (strain Fusaro / DSM 804).